The following is a 520-amino-acid chain: Chaperone Ric-8B (520 aa).

S468 bears the Phosphoserine mark. Phosphothreonine is present on T473.

It belongs to the synembryn family. Interacts with GDP-bound G(s) G-alpha proteins GNAL and GNAS. Does not interact with G-alpha proteins when they are in complex with subunits beta and gamma. In terms of tissue distribution, predominantly expressed in the mature olfactory sensory neurons and also in a few regions in the brain.

Its subcellular location is the cytoplasm. It is found in the cell cortex. In terms of biological role, chaperone that specifically binds and folds nascent G(s) G-alpha proteins (GNAS and GNAL) prior to G protein heterotrimer formation, promoting their association with the plasma membrane. Also acts as a guanine nucleotide exchange factor (GEF) for G(s) proteins by stimulating exchange of bound GDP for free GTP. Acts as an important component for odorant signal transduction by mediating GNAL (G(olf)-alpha) folding, thereby promoting-dependent cAMP accumulation in olfactory sensory neurons. The protein is Chaperone Ric-8B of Mus musculus (Mouse).